Here is a 693-residue protein sequence, read N- to C-terminus: UvrABC system protein B (693 aa).

The Helicase ATP-binding domain maps to 35-188; sequence ERINNGEKDV…DQLLRQFVGI (154 aa). 48 to 55 is an ATP binding site; sequence GATGTGKS. A Beta-hairpin motif is present at residues 101 to 124; it reads YYDYYQPEAYVPQTDTFIEKDSSV. The region spanning 438–600 is the Helicase C-terminal domain; sequence QIDDLLGEIR…VDPTPLRKRI (163 aa). The segment at 612-634 is disordered; that stretch reads ADTKSLLESAGKGRSRGKAPVPV. The 36-residue stretch at 648-683 folds into the UVR domain; sequence VDLIEQLTAQMHSAAGELQFELAARLRDEVGDLKKE.

This sequence belongs to the UvrB family. As to quaternary structure, forms a heterotetramer with UvrA during the search for lesions. Interacts with UvrC in an incision complex.

It is found in the cytoplasm. The UvrABC repair system catalyzes the recognition and processing of DNA lesions. A damage recognition complex composed of 2 UvrA and 2 UvrB subunits scans DNA for abnormalities. Upon binding of the UvrA(2)B(2) complex to a putative damaged site, the DNA wraps around one UvrB monomer. DNA wrap is dependent on ATP binding by UvrB and probably causes local melting of the DNA helix, facilitating insertion of UvrB beta-hairpin between the DNA strands. Then UvrB probes one DNA strand for the presence of a lesion. If a lesion is found the UvrA subunits dissociate and the UvrB-DNA preincision complex is formed. This complex is subsequently bound by UvrC and the second UvrB is released. If no lesion is found, the DNA wraps around the other UvrB subunit that will check the other stand for damage. The polypeptide is UvrABC system protein B (Renibacterium salmoninarum (strain ATCC 33209 / DSM 20767 / JCM 11484 / NBRC 15589 / NCIMB 2235)).